Here is a 70-residue protein sequence, read N- to C-terminus: MKKDIHPKVFNATITCACGNEEKVLSTKGEQVNVEVCSACHPFFTGKQRFLDTAGRIDRFRKKYAKFEQK.

Residues C16, C18, C37, and C40 each contribute to the Zn(2+) site.

This sequence belongs to the bacterial ribosomal protein bL31 family. Type A subfamily. As to quaternary structure, part of the 50S ribosomal subunit. It depends on Zn(2+) as a cofactor.

Functionally, binds the 23S rRNA. The chain is Large ribosomal subunit protein bL31 from Desulfovibrio desulfuricans (strain ATCC 27774 / DSM 6949 / MB).